Reading from the N-terminus, the 228-residue chain is Urease accessory protein UreF (228 aa).

The protein belongs to the UreF family. UreD, UreF and UreG form a complex that acts as a GTP-hydrolysis-dependent molecular chaperone, activating the urease apoprotein by helping to assemble the nickel containing metallocenter of UreC. The UreE protein probably delivers the nickel.

The protein resides in the cytoplasm. Its function is as follows. Required for maturation of urease via the functional incorporation of the urease nickel metallocenter. The protein is Urease accessory protein UreF of Photorhabdus laumondii subsp. laumondii (strain DSM 15139 / CIP 105565 / TT01) (Photorhabdus luminescens subsp. laumondii).